We begin with the raw amino-acid sequence, 493 residues long: Guanosine-5'-triphosphate,3'-diphosphate pyrophosphatase (493 aa).

The protein belongs to the GppA/Ppx family. GppA subfamily.

The catalysed reaction is guanosine 3'-diphosphate 5'-triphosphate + H2O = guanosine 3',5'-bis(diphosphate) + phosphate + H(+). It participates in purine metabolism; ppGpp biosynthesis; ppGpp from GTP: step 2/2. In terms of biological role, catalyzes the conversion of pppGpp to ppGpp. Guanosine pentaphosphate (pppGpp) is a cytoplasmic signaling molecule which together with ppGpp controls the 'stringent response', an adaptive process that allows bacteria to respond to amino acid starvation, resulting in the coordinated regulation of numerous cellular activities. The sequence is that of Guanosine-5'-triphosphate,3'-diphosphate pyrophosphatase from Salmonella dublin (strain CT_02021853).